The primary structure comprises 497 residues: Envelope glycoprotein E (497 aa).

Over 1-398 the chain is Virion surface; it reads MCVFQILIIV…GTIIYDILLT (398 aa). N-linked (GlcNAc...) asparagine; by host glycans are attached at residues Asn-60, Asn-133, Asn-148, Asn-203, Asn-277, Asn-366, and Asn-388. A helical membrane pass occupies residues 399–419; the sequence is SLSIGAIIIVIVGGVCIAILI. Topologically, residues 420–497 are intravirion; that stretch reads RRRRRRRTRG…KIRKRLDLYH (78 aa).

The protein belongs to the alphaherpesvirinae glycoprotein E family. Interacts with gI. Phosphorylated within the acidic cluster. Phosphorylation determines whether endocytosed viral gE traffics to the trans-Golgi network or recycles to the cell membrane.

The protein localises to the virion membrane. It localises to the host cell membrane. It is found in the host cell junction. Its subcellular location is the host Golgi apparatus membrane. The protein resides in the host endosome membrane. Functionally, in epithelial cells, the heterodimer gE/gI is required for the cell-to-cell spread of the virus, by sorting nascent virions to cell junctions. Once the virus reaches the cell junctions, virus particles can spread to adjacent cells extremely rapidly through interactions with cellular receptors that accumulate at these junctions. Implicated in basolateral spread in polarized cells. In neuronal cells, gE/gI is essential for the anterograde spread of the infection throughout the host nervous system. Together with US9, the heterodimer gE/gI is involved in the sorting and transport of viral structural components toward axon tips. This is Envelope glycoprotein E (MDV096) from Gallus gallus (Chicken).